Consider the following 507-residue polypeptide: Tyrosine protein-kinase src-2 (507 aa).

Positions 1–10 are enriched in basic and acidic residues; the sequence is MGSCIGKEDP. The tract at residues 1–52 is disordered; the sequence is MGSCIGKEDPPPGATSPVHTSSTLGRESLPSHPRIPSIGPIAASSSGNTIDK. A lipid anchor (N-myristoyl glycine) is attached at Gly2. Over residues 35–47 the composition is skewed to low complexity; sequence IPSIGPIAASSSG. Residues 57-118 form the SH3 domain; the sequence is SQSANFVALF…PSNYVAREKS (62 aa). The 93-residue stretch at 124–216 folds into the SH2 domain; sequence WYFGKMRRID…GLCVNLGAPC (93 aa). In terms of domain architecture, Protein kinase spans 240 to 494; the sequence is VRLIRQIGAG…LQWKLEDLFN (255 aa). Residues 246–254 and Lys268 each bind ATP; that span reads IGAGQFGEV. Asp358 acts as the Proton acceptor in catalysis. Tyr500 carries the phosphotyrosine modification.

It belongs to the protein kinase superfamily. Tyr protein kinase family. SRC subfamily. Mg(2+) is required as a cofactor. Requires Mn(2+) as cofactor. In terms of processing, may be phosphorylated on Tyr-500 by csk-1. In terms of tissue distribution, expressed in vulva, cells around anus and pharyngeal muscles.

The enzyme catalyses L-tyrosyl-[protein] + ATP = O-phospho-L-tyrosyl-[protein] + ADP + H(+). With respect to regulation, may be inhibited by csk-1-mediated phosphorylation at Tyr-500. Non-receptor tyrosine-protein kinase which may play a role in larval and pharynx development. Unlike src-1, does not play a role in embryonic development. The chain is Tyrosine protein-kinase src-2 from Caenorhabditis elegans.